The primary structure comprises 243 residues: Leucyl/phenylalanyl-tRNA--protein transferase (243 aa).

This sequence belongs to the L/F-transferase family.

The protein localises to the cytoplasm. The enzyme catalyses N-terminal L-lysyl-[protein] + L-leucyl-tRNA(Leu) = N-terminal L-leucyl-L-lysyl-[protein] + tRNA(Leu) + H(+). It carries out the reaction N-terminal L-arginyl-[protein] + L-leucyl-tRNA(Leu) = N-terminal L-leucyl-L-arginyl-[protein] + tRNA(Leu) + H(+). The catalysed reaction is L-phenylalanyl-tRNA(Phe) + an N-terminal L-alpha-aminoacyl-[protein] = an N-terminal L-phenylalanyl-L-alpha-aminoacyl-[protein] + tRNA(Phe). Its function is as follows. Functions in the N-end rule pathway of protein degradation where it conjugates Leu, Phe and, less efficiently, Met from aminoacyl-tRNAs to the N-termini of proteins containing an N-terminal arginine or lysine. In Vibrio cholerae serotype O1 (strain ATCC 39315 / El Tor Inaba N16961), this protein is Leucyl/phenylalanyl-tRNA--protein transferase.